The sequence spans 369 residues: Aminomethyltransferase (369 aa).

This sequence belongs to the GcvT family. In terms of assembly, the glycine cleavage system is composed of four proteins: P, T, L and H.

The catalysed reaction is N(6)-[(R)-S(8)-aminomethyldihydrolipoyl]-L-lysyl-[protein] + (6S)-5,6,7,8-tetrahydrofolate = N(6)-[(R)-dihydrolipoyl]-L-lysyl-[protein] + (6R)-5,10-methylene-5,6,7,8-tetrahydrofolate + NH4(+). Its function is as follows. The glycine cleavage system catalyzes the degradation of glycine. The sequence is that of Aminomethyltransferase from Rippkaea orientalis (strain PCC 8801 / RF-1) (Cyanothece sp. (strain PCC 8801)).